The following is a 471-amino-acid chain: Tryptophanase (471 aa).

An N6-acetyllysine mark is found at lysine 5, lysine 115, and lysine 156. An N6-(pyridoxal phosphate)lysine modification is found at lysine 270. The residue at position 450 (lysine 450) is an N6-acetyllysine.

It belongs to the beta-eliminating lyase family. Homotetramer. Pyridoxal 5'-phosphate is required as a cofactor.

The catalysed reaction is L-tryptophan + H2O = indole + pyruvate + NH4(+). It participates in amino-acid degradation; L-tryptophan degradation via pyruvate pathway; indole and pyruvate from L-tryptophan: step 1/1. The polypeptide is Tryptophanase (Escherichia coli O6:H1 (strain CFT073 / ATCC 700928 / UPEC)).